We begin with the raw amino-acid sequence, 326 residues long: Protein FAM50 homolog (326 aa).

Positions 77 to 111 are disordered; the sequence is ISNRDLQVARGDQSSSTQSKDSQEAREKEEHVAKH. Residues 97 to 109 are compositionally biased toward basic and acidic residues; it reads DSQEAREKEEHVA.

Belongs to the FAM50 family.

In Caenorhabditis elegans, this protein is Protein FAM50 homolog.